The primary structure comprises 422 residues: Histidine--tRNA ligase (422 aa).

The protein belongs to the class-II aminoacyl-tRNA synthetase family. As to quaternary structure, homodimer.

The protein localises to the cytoplasm. It carries out the reaction tRNA(His) + L-histidine + ATP = L-histidyl-tRNA(His) + AMP + diphosphate + H(+). This chain is Histidine--tRNA ligase, found in Alcanivorax borkumensis (strain ATCC 700651 / DSM 11573 / NCIMB 13689 / SK2).